Reading from the N-terminus, the 366-residue chain is Chorismate synthase (366 aa).

The NADP(+) site is built by Arg48 and Arg54. Residues 125-127, 238-239, Gly278, 293-297, and Arg319 contribute to the FMN site; these read RSS, NA, and KPTSS.

Belongs to the chorismate synthase family. As to quaternary structure, homotetramer. FMNH2 serves as cofactor.

It catalyses the reaction 5-O-(1-carboxyvinyl)-3-phosphoshikimate = chorismate + phosphate. The protein operates within metabolic intermediate biosynthesis; chorismate biosynthesis; chorismate from D-erythrose 4-phosphate and phosphoenolpyruvate: step 7/7. Functionally, catalyzes the anti-1,4-elimination of the C-3 phosphate and the C-6 proR hydrogen from 5-enolpyruvylshikimate-3-phosphate (EPSP) to yield chorismate, which is the branch point compound that serves as the starting substrate for the three terminal pathways of aromatic amino acid biosynthesis. This reaction introduces a second double bond into the aromatic ring system. The chain is Chorismate synthase from Chromobacterium violaceum (strain ATCC 12472 / DSM 30191 / JCM 1249 / CCUG 213 / NBRC 12614 / NCIMB 9131 / NCTC 9757 / MK).